We begin with the raw amino-acid sequence, 122 residues long: Large ribosomal subunit protein uL14 (122 aa).

It belongs to the universal ribosomal protein uL14 family. Part of the 50S ribosomal subunit. Forms a cluster with proteins L3 and L19. In the 70S ribosome, L14 and L19 interact and together make contacts with the 16S rRNA in bridges B5 and B8.

Binds to 23S rRNA. Forms part of two intersubunit bridges in the 70S ribosome. This is Large ribosomal subunit protein uL14 from Thermobifida fusca (strain YX).